A 280-amino-acid chain; its full sequence is Hydrolase MT0498 (280 aa).

Residues 1 to 251 enclose the CN hydrolase domain; sequence MRIALAQIRS…PQLLVADIDV (251 aa). Glu-40 (proton acceptor) is an active-site residue. Lys-110 (proton donor) is an active-site residue. Cys-146 (nucleophile) is an active-site residue.

The protein belongs to the carbon-nitrogen hydrolase superfamily. NIT1/NIT2 family.

The chain is Hydrolase MT0498 from Mycobacterium tuberculosis (strain CDC 1551 / Oshkosh).